Here is a 383-residue protein sequence, read N- to C-terminus: MSLKNLTHALFTERFGYAPTLTIQAPGRVNLIGEHTDYNDGFVLPCAIDYQTVIACAKRDDRQIRVIAADYEGQQDQFSLDSPIVSHPDQRWSDYVRGVIKHLQQRNADFGGADLVISGNVPQGAGLSSSASLEVAVGQAMQALYALPLDGVALALNGQEAENQFVGCNCGIMDQLISALGEKDHALLIDCRTLETRAVSVPEDIAVVIINSNVKRGLVDSEYNTRREQCEEAARFFGVKALRDVSPDLFFPIQHELDPIVAKRARHVISENDRTLAAADALAAGDMKLMGKLMAESHVSMRDDFEITVPPIDRLVEIVKSVIGDRGGVRMTGGGFGGCIVALMPLALVEPVRAAVAREYPLQTNGLKETFYVCKASEGAGTC.

34-37 (EHTD) contacts substrate. 124 to 130 (GAGLSSS) provides a ligand contact to ATP. The Mg(2+) site is built by serine 130 and glutamate 162. The Proton acceptor role is filled by aspartate 174. Tyrosine 223 serves as a coordination point for substrate.

The protein belongs to the GHMP kinase family. GalK subfamily.

The protein localises to the cytoplasm. It carries out the reaction alpha-D-galactose + ATP = alpha-D-galactose 1-phosphate + ADP + H(+). It functions in the pathway carbohydrate metabolism; galactose metabolism. Catalyzes the transfer of the gamma-phosphate of ATP to D-galactose to form alpha-D-galactose-1-phosphate (Gal-1-P). This chain is Galactokinase, found in Serratia proteamaculans (strain 568).